The following is a 363-amino-acid chain: 3-dehydroquinate synthase (363 aa).

NAD(+) is bound by residues 72–77, 130–131, lysine 142, and lysine 151; these read SGEKEK and TT. 3 residues coordinate Zn(2+): glutamate 184, histidine 247, and histidine 264.

The protein belongs to the sugar phosphate cyclases superfamily. Dehydroquinate synthase family. Co(2+) is required as a cofactor. Requires Zn(2+) as cofactor. NAD(+) serves as cofactor.

Its subcellular location is the cytoplasm. The catalysed reaction is 7-phospho-2-dehydro-3-deoxy-D-arabino-heptonate = 3-dehydroquinate + phosphate. It participates in metabolic intermediate biosynthesis; chorismate biosynthesis; chorismate from D-erythrose 4-phosphate and phosphoenolpyruvate: step 2/7. Its function is as follows. Catalyzes the conversion of 3-deoxy-D-arabino-heptulosonate 7-phosphate (DAHP) to dehydroquinate (DHQ). The polypeptide is 3-dehydroquinate synthase (Bacillus anthracis (strain A0248)).